A 398-amino-acid polypeptide reads, in one-letter code: Phosphoglycerate kinase (398 aa).

Residues 21 to 23 (DIN), Arg-37, 60 to 63 (HQGR), Arg-117, and Arg-157 each bind substrate. Residues Glu-332 and 357-360 (GGDT) each bind ATP.

The protein belongs to the phosphoglycerate kinase family. Monomer.

Its subcellular location is the cytoplasm. It carries out the reaction (2R)-3-phosphoglycerate + ATP = (2R)-3-phospho-glyceroyl phosphate + ADP. It functions in the pathway carbohydrate degradation; glycolysis; pyruvate from D-glyceraldehyde 3-phosphate: step 2/5. In Halobacterium salinarum (strain ATCC 29341 / DSM 671 / R1), this protein is Phosphoglycerate kinase.